Consider the following 209-residue polypeptide: Large ribosomal subunit protein uL3 (209 aa).

Residues 144–165 (GSMGAASDPSRTFKNKKMPGHM) form a disordered region.

The protein belongs to the universal ribosomal protein uL3 family. As to quaternary structure, part of the 50S ribosomal subunit. Forms a cluster with proteins L14 and L19.

Its function is as follows. One of the primary rRNA binding proteins, it binds directly near the 3'-end of the 23S rRNA, where it nucleates assembly of the 50S subunit. The polypeptide is Large ribosomal subunit protein uL3 (Clostridium novyi (strain NT)).